The following is a 121-amino-acid chain: Two-component response regulator ORR13 (121 aa).

The 117-residue stretch at 5–121 (HVLVVDDTHV…ADVPRILNYI (117 aa)) folds into the Response regulatory domain. Residue Asp-55 is modified to 4-aspartylphosphate.

This sequence belongs to the ARR family. Type-A subfamily. Two-component system major event consists of a His-to-Asp phosphorelay between a sensor histidine kinase (HK) and a response regulator (RR). In plants, the His-to-Asp phosphorelay involves an additional intermediate named Histidine-containing phosphotransfer protein (HPt). This multistep phosphorelay consists of a His-Asp-His-Asp sequential transfer of a phosphate group between first a His and an Asp of the HK protein, followed by the transfer to a conserved His of the HPt protein and finally the transfer to an Asp in the receiver domain of the RR protein. In terms of tissue distribution, expressed in flowers and panicles.

Functions as a response regulator involved in His-to-Asp phosphorelay signal transduction system. Phosphorylation of the Asp residue in the receiver domain activates the ability of the protein to promote the transcription of target genes. Type-A response regulators seem to act as negative regulators of the cytokinin signaling. This Oryza sativa subsp. japonica (Rice) protein is Two-component response regulator ORR13.